The following is a 454-amino-acid chain: Asparagine--tRNA ligase (454 aa).

It belongs to the class-II aminoacyl-tRNA synthetase family. In terms of assembly, homodimer.

It localises to the cytoplasm. The catalysed reaction is tRNA(Asn) + L-asparagine + ATP = L-asparaginyl-tRNA(Asn) + AMP + diphosphate + H(+). The chain is Asparagine--tRNA ligase from Ureaplasma parvum serovar 3 (strain ATCC 27815 / 27 / NCTC 11736).